A 330-amino-acid polypeptide reads, in one-letter code: DNA-directed RNA polymerase subunit alpha (330 aa).

An alpha N-terminal domain (alpha-NTD) region spans residues 1–237 (MYTEINEMLT…RQLHAFVDMK (237 aa)). The tract at residues 251–330 (FDPVLLRSVD…ENWPPASLGE (80 aa)) is alpha C-terminal domain (alpha-CTD).

The protein belongs to the RNA polymerase alpha chain family. Homodimer. The RNAP catalytic core consists of 2 alpha, 1 beta, 1 beta' and 1 omega subunit. When a sigma factor is associated with the core the holoenzyme is formed, which can initiate transcription.

The catalysed reaction is RNA(n) + a ribonucleoside 5'-triphosphate = RNA(n+1) + diphosphate. Functionally, DNA-dependent RNA polymerase catalyzes the transcription of DNA into RNA using the four ribonucleoside triphosphates as substrates. The polypeptide is DNA-directed RNA polymerase subunit alpha (Legionella pneumophila (strain Corby)).